A 452-amino-acid chain; its full sequence is L-seryl-tRNA(Sec) selenium transferase (452 aa).

An N6-(pyridoxal phosphate)lysine modification is found at Lys-285.

The protein belongs to the SelA family. Pyridoxal 5'-phosphate serves as cofactor.

It localises to the cytoplasm. The enzyme catalyses L-seryl-tRNA(Sec) + selenophosphate + H(+) = L-selenocysteinyl-tRNA(Sec) + phosphate. It functions in the pathway aminoacyl-tRNA biosynthesis; selenocysteinyl-tRNA(Sec) biosynthesis; selenocysteinyl-tRNA(Sec) from L-seryl-tRNA(Sec) (bacterial route): step 1/1. Its function is as follows. Converts seryl-tRNA(Sec) to selenocysteinyl-tRNA(Sec) required for selenoprotein biosynthesis. This Aquifex aeolicus (strain VF5) protein is L-seryl-tRNA(Sec) selenium transferase.